The chain runs to 270 residues: Orotidine 5'-phosphate decarboxylase (270 aa).

Residue K95 is the Proton donor of the active site.

Belongs to the OMP decarboxylase family. Type 2 subfamily.

It catalyses the reaction orotidine 5'-phosphate + H(+) = UMP + CO2. The protein operates within pyrimidine metabolism; UMP biosynthesis via de novo pathway; UMP from orotate: step 2/2. This is Orotidine 5'-phosphate decarboxylase from Azoarcus sp. (strain BH72).